Reading from the N-terminus, the 156-residue chain is Small ribosomal subunit protein uS7 (156 aa).

This sequence belongs to the universal ribosomal protein uS7 family. Part of the 30S ribosomal subunit. Contacts proteins S9 and S11.

Functionally, one of the primary rRNA binding proteins, it binds directly to 16S rRNA where it nucleates assembly of the head domain of the 30S subunit. Is located at the subunit interface close to the decoding center, probably blocks exit of the E-site tRNA. This chain is Small ribosomal subunit protein uS7, found in Actinobacillus succinogenes (strain ATCC 55618 / DSM 22257 / CCUG 43843 / 130Z).